A 378-amino-acid chain; its full sequence is Probable pectin lyase A (378 aa).

The first 18 residues, 1 to 18 (MKYASFLALVGFITSTSA), serve as a signal peptide directing secretion. Intrachain disulfides connect Cys-81–Cys-100 and Cys-90–Cys-224. The active site involves Arg-254. Cys-321 and Cys-329 are oxidised to a cystine.

This sequence belongs to the polysaccharide lyase 1 family.

The protein resides in the secreted. It catalyses the reaction Eliminative cleavage of (1-&gt;4)-alpha-D-galacturonan methyl ester to give oligosaccharides with 4-deoxy-6-O-methyl-alpha-D-galact-4-enuronosyl groups at their non-reducing ends.. Functionally, pectinolytic enzymes consist of four classes of enzymes: pectin lyase, polygalacturonase, pectin methylesterase and rhamnogalacturonase. Among pectinolytic enzymes, pectin lyase is the most important in depolymerization of pectin, since it cleaves internal glycosidic bonds of highly methylated pectins. This Aspergillus clavatus (strain ATCC 1007 / CBS 513.65 / DSM 816 / NCTC 3887 / NRRL 1 / QM 1276 / 107) protein is Probable pectin lyase A (pelA).